A 1058-amino-acid chain; its full sequence is Carbamoyl phosphate synthase large chain (1058 aa).

The segment at 1-401 (MPKRKDIQKI…SLLKACRSLE (401 aa)) is carboxyphosphate synthetic domain. Residues R129, R169, G175, G176, R208, I210, E215, G241, I242, H243, Q284, and E298 each coordinate ATP. The ATP-grasp 1 domain maps to 133–327 (KQLMQELDQP…IAKLAAKIAV (195 aa)). Residues Q284, E298, and N300 each coordinate Mg(2+). Mn(2+) is bound by residues Q284, E298, and N300. The oligomerization domain stretch occupies residues 402–546 (IGVCHNEMTS…YSTYELENES (145 aa)). Positions 547 to 929 (VQSNKESILV…ALYKAFEANN (383 aa)) are carbamoyl phosphate synthetic domain. In terms of domain architecture, ATP-grasp 2 spans 671–861 (EKALKELGIP…MAQIATKLIL (191 aa)). Residues R707, S746, I748, E752, G777, V778, H779, S780, Q820, and E832 each coordinate ATP. Q820, E832, and N834 together coordinate Mg(2+). Q820, E832, and N834 together coordinate Mn(2+). Residues 930 to 1058 (SHLSEFGQIV…ESRCFNIEAI (129 aa)) form the MGS-like domain. Positions 930 to 1058 (SHLSEFGQIV…ESRCFNIEAI (129 aa)) are allosteric domain.

The protein belongs to the CarB family. Composed of two chains; the small (or glutamine) chain promotes the hydrolysis of glutamine to ammonia, which is used by the large (or ammonia) chain to synthesize carbamoyl phosphate. Tetramer of heterodimers (alpha,beta)4. Requires Mg(2+) as cofactor. It depends on Mn(2+) as a cofactor.

It catalyses the reaction hydrogencarbonate + L-glutamine + 2 ATP + H2O = carbamoyl phosphate + L-glutamate + 2 ADP + phosphate + 2 H(+). The enzyme catalyses hydrogencarbonate + NH4(+) + 2 ATP = carbamoyl phosphate + 2 ADP + phosphate + 2 H(+). It participates in amino-acid biosynthesis; L-arginine biosynthesis; carbamoyl phosphate from bicarbonate: step 1/1. It functions in the pathway pyrimidine metabolism; UMP biosynthesis via de novo pathway; (S)-dihydroorotate from bicarbonate: step 1/3. Functionally, large subunit of the glutamine-dependent carbamoyl phosphate synthetase (CPSase). CPSase catalyzes the formation of carbamoyl phosphate from the ammonia moiety of glutamine, carbonate, and phosphate donated by ATP, constituting the first step of 2 biosynthetic pathways, one leading to arginine and/or urea and the other to pyrimidine nucleotides. The large subunit (synthetase) binds the substrates ammonia (free or transferred from glutamine from the small subunit), hydrogencarbonate and ATP and carries out an ATP-coupled ligase reaction, activating hydrogencarbonate by forming carboxy phosphate which reacts with ammonia to form carbamoyl phosphate. The polypeptide is Carbamoyl phosphate synthase large chain (Streptococcus pyogenes serotype M18 (strain MGAS8232)).